Here is an 83-residue protein sequence, read N- to C-terminus: Exodeoxyribonuclease 7 small subunit (83 aa).

Residues 63–83 (VQNDDGTTGTEPLADTGESGR) form a disordered region.

This sequence belongs to the XseB family. As to quaternary structure, heterooligomer composed of large and small subunits.

It is found in the cytoplasm. The enzyme catalyses Exonucleolytic cleavage in either 5'- to 3'- or 3'- to 5'-direction to yield nucleoside 5'-phosphates.. Functionally, bidirectionally degrades single-stranded DNA into large acid-insoluble oligonucleotides, which are then degraded further into small acid-soluble oligonucleotides. This Gluconobacter oxydans (strain 621H) (Gluconobacter suboxydans) protein is Exodeoxyribonuclease 7 small subunit.